Reading from the N-terminus, the 90-residue chain is Small ribosomal subunit protein bS16 (90 aa).

The protein belongs to the bacterial ribosomal protein bS16 family.

The sequence is that of Small ribosomal subunit protein bS16 from Lactococcus lactis subsp. lactis (strain IL1403) (Streptococcus lactis).